Reading from the N-terminus, the 240-residue chain is MFPLLFVAGLVVLNLVSSARSQKTEPLSGTGDQSLFRGADQHDFAIVIPPGGTECFWQFAHQTGYFYFSYEVQRTIGMSHDRHVAATAHTPQGFLIETSKNVRGQINFSTHETGFYQLCLANQQNRFASVQVYLNFGVFYEGPEMDHKENERKQLNDTLDAIEESTRKVHYNIFHMWRHYNFARMRKTADFFLLQSNYNYVNWWSTAQSLVIVLSGILQLYFLKRLFNTPMTTETQKPRC.

The N-terminal stretch at Met-1 to Ser-21 is a signal peptide. At Gln-22–Tyr-200 the chain is on the lumenal side. Residues Thr-53 to Val-138 enclose the GOLD domain. 2 N-linked (GlcNAc...) asparagine glycosylation sites follow: Asn-107 and Asn-156. Residues Val-201–Leu-223 traverse the membrane as a helical segment. Residues Lys-224–Cys-240 are Cytoplasmic-facing.

Belongs to the EMP24/GP25L family.

The protein resides in the endoplasmic reticulum membrane. This chain is Transmembrane emp24 domain-containing protein 6 (TMED6), found in Bos taurus (Bovine).